Here is a 397-residue protein sequence, read N- to C-terminus: S-adenosylmethionine synthase (397 aa).

H17 is a binding site for ATP. A Mg(2+)-binding site is contributed by D19. E45 contacts K(+). The L-methionine site is built by E58 and Q101. Residues 101 to 111 are flexible loop; it reads QSPDIAQGVDK. ATP contacts are provided by residues 176–178, 243–244, D252, 258–259, and K279; these read DGK, RF, and RK. D252 is a binding site for L-methionine. L-methionine is bound at residue K283.

The protein belongs to the AdoMet synthase family. In terms of assembly, homotetramer; dimer of dimers. It depends on Mg(2+) as a cofactor. Requires K(+) as cofactor.

It is found in the cytoplasm. It catalyses the reaction L-methionine + ATP + H2O = S-adenosyl-L-methionine + phosphate + diphosphate. The protein operates within amino-acid biosynthesis; S-adenosyl-L-methionine biosynthesis; S-adenosyl-L-methionine from L-methionine: step 1/1. In terms of biological role, catalyzes the formation of S-adenosylmethionine (AdoMet) from methionine and ATP. The overall synthetic reaction is composed of two sequential steps, AdoMet formation and the subsequent tripolyphosphate hydrolysis which occurs prior to release of AdoMet from the enzyme. This is S-adenosylmethionine synthase from Staphylococcus aureus.